Consider the following 109-residue polypeptide: uncharacterized protein (109 aa).

A helical membrane pass occupies residues 63-85; the sequence is LFVKTFFACTYIIMLAFQVYIFL.

The protein resides in the membrane. This is an uncharacterized protein from Saccharomyces cerevisiae (strain ATCC 204508 / S288c) (Baker's yeast).